The following is a 433-amino-acid chain: Enolase (433 aa).

Gln167 serves as a coordination point for (2R)-2-phosphoglycerate. Catalysis depends on Glu209, which acts as the Proton donor. Asp246 contacts Mg(2+). The Plasminogen-binding motif motif lies at 252 to 260 (FYDAEKKEY). Residues Glu291 and Asp318 each coordinate Mg(2+). (2R)-2-phosphoglycerate is bound by residues Lys343, Arg372, Ser373, and Lys394. Lys343 (proton acceptor) is an active-site residue.

It belongs to the enolase family. As to quaternary structure, component of the RNA degradosome, a multiprotein complex involved in RNA processing and mRNA degradation. Requires Mg(2+) as cofactor.

It is found in the cell inner membrane. The protein resides in the cell outer membrane. Its subcellular location is the cytoplasm. The protein localises to the secreted. It localises to the cell surface. It carries out the reaction (2R)-2-phosphoglycerate = phosphoenolpyruvate + H2O. It participates in carbohydrate degradation; glycolysis; pyruvate from D-glyceraldehyde 3-phosphate: step 4/5. In terms of biological role, catalyzes the reversible conversion of 2-phosphoglycerate (2-PG) into phosphoenolpyruvate (PEP). It is essential for the degradation of carbohydrates via glycolysis. 'Moonlights' as a plasminogen receptor and plasmin activator. Binds host (human) plasminogen in vitro. Binds human plasmin and plasminogen on the cell surface; enhances the activity of host tissue-specific plasminogen activator (tPA). Plasmin bound to bacteria is partially protected from its physiological inhibitor alpha-2AP (SERPINF2). This chain is Enolase, found in Aeromonas hydrophila.